We begin with the raw amino-acid sequence, 1630 residues long: Transient receptor potential cation channel subfamily M member 1 (1630 aa).

5 disordered regions span residues 1-25 (MGSMRKMSSSFKRGSIKSSTSGSQK), 65-92 (PLPSVTPSSTAEDTKQGDAQSGKWSVSK), 453-492 (APPVDTKVAEKEKKPPTATTKGRGKGKGKKKGKVKEEVEE), 620-643 (LGMEDDEPPAKGKKKKKKKKEEEI), and 824-858 (SKENEDGKEKEEENVDANADAGSRKGDEENEHKKQ). Topologically, residues 1–877 (MGSMRKMSSS…CEFYNAPIVK (877 aa)) are cytoplasmic. Low complexity predominate over residues 8–25 (SSSFKRGSIKSSTSGSQK). Over residues 69–92 (VTPSSTAEDTKQGDAQSGKWSVSK) the composition is skewed to polar residues. A compositionally biased stretch (basic residues) spans 474–485 (GRGKGKGKKKGK). Composition is skewed to basic and acidic residues over residues 825–834 (KENEDGKEKE) and 845–855 (GSRKGDEENEH). Residues 878–898 (FWFYTISYLGYLLLFNYVILV) traverse the membrane as a helical segment. The Extracellular portion of the chain corresponds to 899-944 (RMDGWPSPQEWIVISYIVSLALEKIREILMSEPGKLSQKIKVWLQE). Residues 945-965 (YWNITDLVAISMFMVGAILRL) traverse the membrane as a helical segment. The Cytoplasmic segment spans residues 966 to 975 (QNQPYMGYGR). Residues 976–996 (VIYCVDIILWYIRVLDIFGVN) form a helical membrane-spanning segment. Over 997-1008 (KYLGPYVMMIGK) the chain is Extracellular. Residues 1009-1029 (MMIDMLYFVVIMLVVLMSFGV) traverse the membrane as a helical segment. Residues 1030–1107 (ARQAILHPEE…CIPGAWLTPA (78 aa)) are Cytoplasmic-facing. Residues 1108 to 1128 (LMACYLLVANILLVNLLIAVF) form a helical membrane-spanning segment. Residue N1129 is glycosylated (N-linked (GlcNAc...) asparagine). The Extracellular segment spans residues 1129 to 1158 (NNTFFEVKSISNQVWKFQRYQLIMTFHDRP). A helical transmembrane segment spans residues 1159–1179 (VLPPPMIILSHIYIIVMRLSG). Residues 1180-1630 (RCRKKREGDQ…QEKGNPETEC (451 aa)) lie on the Cytoplasmic side of the membrane. A coiled-coil region spans residues 1235–1255 (IRVTSERVENMSMRLEEINER). 2 disordered regions span residues 1362–1414 (EDVK…AGEL) and 1575–1630 (CLRS…ETEC).

The protein belongs to the transient receptor (TC 1.A.4) family. LTrpC subfamily. TRPM1 sub-subfamily. In terms of assembly, interacts with TRPM3; the interaction results in the formation of a heteromultimeric cation channel complex that are functionally different from the homomeric channels. Interacts with GPR179. Associates with both guanine nucleotide-binding proteins G(o) and beta-gamma G protein dimer; implicated in directly regulating TRPM1 channel open-state.

It localises to the cell membrane. The protein resides in the endoplasmic reticulum membrane. The protein localises to the cell projection. Its subcellular location is the axon. It catalyses the reaction Ca(2+)(in) = Ca(2+)(out). The enzyme catalyses Mg(2+)(in) = Mg(2+)(out). It carries out the reaction Mn(2+)(in) = Mn(2+)(out). The catalysed reaction is Ni(2+)(in) = Ni(2+)(out). With respect to regulation, inhibited by extracellular zinc ions. Inhibited by intracellular Mg(2+). Activated by the neuroactive steroid pregnenolone sulfate. Negatively regulated by activation of GRM6 receptors in the ON-bipolar cells. In terms of biological role, constitutively open nonselective divalent cation-conducting channels which mediate the influx of Ca(2+), Mg(2+), Mn(2+), Ba(2+), and Ni(2+) into the cytoplasm, leading to membrane depolarization. Impermeable to zinc ions. In addition, forms heteromultimeric ion channels with TRPM3 which are permeable for calcium and zinc ions. Plays an essential role for the depolarizing photoresponse of retinal ON bipolar cells. In the dark, tonic release of glutamate activates the G-protein coupled receptor for glutamate GRM6, its activation induces the release of G(o) protein and the beta-gamma G protein dimer. Both subunits can interact and inactivate the TRPM1 channel. A light onset, induces decrease in glutamate release and deactivation of GRM6 leading to channel opening and membrane depolarization. May play a role in metastasis suppression. This chain is Transient receptor potential cation channel subfamily M member 1, found in Rattus norvegicus (Rat).